Reading from the N-terminus, the 158-residue chain is MSRRNISKKRFPEADSTYNSYLVSLLITRILKSGKKNLAQNIVNAAFEIIKVKTNEDPLVVFERAIRNASPVVEVKARRIGGSTYQVPVEVSGFRATNLSLRWIIQYSRQRVGRTMSIKLANEIIDTANDIGNTIKKKEETHKMQMPIKHLHIFVINY.

Belongs to the universal ribosomal protein uS7 family. Part of the 30S ribosomal subunit.

The protein localises to the plastid. The protein resides in the chloroplast. One of the primary rRNA binding proteins, it binds directly to 16S rRNA where it nucleates assembly of the head domain of the 30S subunit. The sequence is that of Small ribosomal subunit protein uS7c (rps7) from Trieres chinensis (Marine centric diatom).